The primary structure comprises 102 residues: Small ribosomal subunit protein uS10 (102 aa).

Belongs to the universal ribosomal protein uS10 family. In terms of assembly, part of the 30S ribosomal subunit.

In terms of biological role, involved in the binding of tRNA to the ribosomes. The protein is Small ribosomal subunit protein uS10 of Macrococcus caseolyticus (strain JCSC5402) (Macrococcoides caseolyticum).